The primary structure comprises 376 residues: 26S proteasome non-ATPase regulatory subunit 13 (376 aa).

A PCI domain is found at 171-338; sequence SYYKDALRFL…KRVHMTWVQP (168 aa). Residue Lys-298 is modified to N6-acetyllysine.

The protein belongs to the proteasome subunit S11 family. In terms of assembly, component of the 19S proteasome regulatory particle complex. The 26S proteasome consists of a 20S core particle (CP) and two 19S regulatory subunits (RP). The regulatory particle is made of a lid composed of 9 subunits including PSMD13, a base containing 6 ATPases and few additional components.

In terms of biological role, component of the 26S proteasome, a multiprotein complex involved in the ATP-dependent degradation of ubiquitinated proteins. This complex plays a key role in the maintenance of protein homeostasis by removing misfolded or damaged proteins, which could impair cellular functions, and by removing proteins whose functions are no longer required. Therefore, the proteasome participates in numerous cellular processes, including cell cycle progression, apoptosis, or DNA damage repair. The protein is 26S proteasome non-ATPase regulatory subunit 13 of Rattus norvegicus (Rat).